Here is a 57-residue protein sequence, read N- to C-terminus: Large ribosomal subunit protein bL32 (57 aa).

The protein belongs to the bacterial ribosomal protein bL32 family.

This is Large ribosomal subunit protein bL32 from Corynebacterium glutamicum (strain R).